Reading from the N-terminus, the 274-residue chain is Phosphoribosylaminoimidazole-succinocarboxamide synthase (274 aa).

Belongs to the SAICAR synthetase family.

It carries out the reaction 5-amino-1-(5-phospho-D-ribosyl)imidazole-4-carboxylate + L-aspartate + ATP = (2S)-2-[5-amino-1-(5-phospho-beta-D-ribosyl)imidazole-4-carboxamido]succinate + ADP + phosphate + 2 H(+). It functions in the pathway purine metabolism; IMP biosynthesis via de novo pathway; 5-amino-1-(5-phospho-D-ribosyl)imidazole-4-carboxamide from 5-amino-1-(5-phospho-D-ribosyl)imidazole-4-carboxylate: step 1/2. This chain is Phosphoribosylaminoimidazole-succinocarboxamide synthase, found in Nitrosopumilus maritimus (strain SCM1).